Here is a 153-residue protein sequence, read N- to C-terminus: Penitrem biosynthesis cluster 1 protein I (153 aa).

It participates in secondary metabolite biosynthesis. Functionally, part of the gene cluster that mediates the biosynthesis of the indole diterpenes penitrems. The geranylgeranyl diphosphate (GGPP) synthase ptmG catalyzes the first step in penitrem biosynthesis via conversion of farnesyl pyrophosphate and isopentyl pyrophosphate into geranylgeranyl pyrophosphate (GGPP). Condensation of indole-3-glycerol phosphate with GGPP by the prenyl transferase ptmC then forms 3-geranylgeranylindole (3-GGI). Epoxidation by the FAD-dependent monooxygenase ptmM leads to a epoxidized-GGI that is substrate of the terpene cyclase ptmB for cyclization to yield paspaline. Paspaline is subsequently converted to 13-desoxypaxilline by the cytochrome P450 monooxygenase ptmP, the latter being then converted to paxilline by the cytochrome P450 monooxygenase ptmQ. Paxilline is converted to beta-paxitriol via C-10 ketoreduction by the short-chain dehydrogenase ptmH which can be monoprenylated at the C-20 by the indole diterpene prenyltransferase ptmD. A two-step elimination (acetylation and elimination) process performed by the O-acetyltransferase ptmV and ptmI leads to the production of the prenylated form of penijanthine. The FAD-linked oxidoreductase ptmO then converts the prenylated form of penijanthine into PC-M5 which is in turn transformed into PC-M4 by the aromatic dimethylallyltransferase ptmE. Five sequential oxidative transformations performed by the cytochrome P450 monooxygenases ptmK, ptmU, ptmL, ptmN and ptmJ yield the various penitrem compounds. PtmK, ptmU and ptmM are involved in the formation of the key bicyclic ring of penitrem C via the formation of the intermediates secopenitrem D and penitrem D. PtmL catalyzes the epoxidation of penitrem D and C to yield penitrem B and F, respectively. PtmJ catalyzes the last benzylic hydroxylation to convert penitrem B to prenitrem E and penitrem F to penitrem A. The chain is Penitrem biosynthesis cluster 1 protein I from Penicillium ochrochloron.